Reading from the N-terminus, the 27-residue chain is Pregnancy-associated glycoprotein 62 (27 aa).

The protein belongs to the peptidase A1 family. Post-translationally, glycosylated. As to expression, placenta.

This is Pregnancy-associated glycoprotein 62 (PAG62) from Capra hircus (Goat).